We begin with the raw amino-acid sequence, 446 residues long: Tektin-4 (446 aa).

Coiled coils occupy residues 182 to 215, 297 to 346, and 378 to 422; these read IRNVQELLKRTLDQAAQQIRQNRDAKEALEMDYS, DAIA…NDKS, and SEVG…ANSI.

This sequence belongs to the tektin family.

It is found in the cytoplasm. The protein resides in the cytoskeleton. Its subcellular location is the cilium axoneme. It localises to the cell projection. The protein localises to the cilium. It is found in the flagellum. In terms of biological role, microtubule inner protein (MIP) part of the dynein-decorated doublet microtubules (DMTs) in cilia and flagellar axoneme. Forms filamentous polymers in the walls of ciliary and flagellar microtubules. Contributes to normal sperm motility. This chain is Tektin-4 (tekt4), found in Xenopus laevis (African clawed frog).